A 307-amino-acid chain; its full sequence is Sesquiterpene synthase-like protein Agr10 (307 aa).

The interval 287–307 is disordered; sequence GRYFGDRGPENQSDIPTSSNR. Residues 296 to 307 show a composition bias toward polar residues; it reads ENQSDIPTSSNR.

This sequence belongs to the terpene synthase family.

This Cyclocybe aegerita (Black poplar mushroom) protein is Sesquiterpene synthase-like protein Agr10.